A 353-amino-acid polypeptide reads, in one-letter code: Phosphoribosylformylglycinamidine cyclo-ligase (353 aa).

This sequence belongs to the AIR synthase family.

The protein resides in the cytoplasm. The enzyme catalyses 2-formamido-N(1)-(5-O-phospho-beta-D-ribosyl)acetamidine + ATP = 5-amino-1-(5-phospho-beta-D-ribosyl)imidazole + ADP + phosphate + H(+). Its pathway is purine metabolism; IMP biosynthesis via de novo pathway; 5-amino-1-(5-phospho-D-ribosyl)imidazole from N(2)-formyl-N(1)-(5-phospho-D-ribosyl)glycinamide: step 2/2. In Dinoroseobacter shibae (strain DSM 16493 / NCIMB 14021 / DFL 12), this protein is Phosphoribosylformylglycinamidine cyclo-ligase.